The following is a 149-amino-acid chain: Calmodulin (149 aa).

At Ala2 the chain carries N-acetylalanine. 4 EF-hand domains span residues 8–43 (EQIA…LGQN), 44–79 (PTEA…KMKD), 81–116 (DSEE…LGEK), and 117–149 (LTDE…MTSK). Ca(2+)-binding residues include Asp21, Asp23, Asp25, Thr27, Glu32, Asp57, Asp59, Asp61, Thr63, Glu68, Asp94, Asp96, Asp98, and Glu105. Lys116 carries the post-translational modification N6,N6,N6-trimethyllysine. Ca(2+)-binding residues include Asp130, Asp132, Asp134, Gln136, and Glu141.

The protein belongs to the calmodulin family.

Its function is as follows. Calmodulin mediates the control of a large number of enzymes, ion channels and other proteins by Ca(2+). Among the enzymes to be stimulated by the calmodulin-Ca(2+) complex are a number of protein kinases and phosphatases. This Renilla reniformis (Sea pansy) protein is Calmodulin.